The chain runs to 92 residues: MWPVLWTVVRTYAPYVTFPVAFVVGAVGYHLEWFIRGKEPQPVEEEKSISERREDRKLDELLGKDHTQVVSLKDKLEFAPKAVLNRNRPEKN.

Residues 12–34 (YAPYVTFPVAFVVGAVGYHLEWF) traverse the membrane as a helical segment.

It belongs to the SMIM12 family.

The protein localises to the membrane. The polypeptide is Small integral membrane protein 12 (SMIM12) (Bos taurus (Bovine)).